Reading from the N-terminus, the 202-residue chain is MPPRPRFDRHAPERELPNINERISYSSLRVVDSDGTQLGVISREEALEVAKERELDLVLVSEKATPPVCRIMNYGKFKFEQEKKAKEAKKKSHQTEVKEVKMRYKIDQHDYQVRISQATRFLKAGDKVKCTVIFRGREIQHTALAETLLKRMSKDLEEKAEVQQSPKREGRNMIMFLTPRKTPLLKKESETTEPKKALRSIN.

The tract at residues 178–202 (TPRKTPLLKKESETTEPKKALRSIN) is disordered. Basic and acidic residues predominate over residues 185-196 (LKKESETTEPKK).

It belongs to the IF-3 family. In terms of assembly, monomer.

It localises to the cytoplasm. In terms of biological role, IF-3 binds to the 30S ribosomal subunit and shifts the equilibrium between 70S ribosomes and their 50S and 30S subunits in favor of the free subunits, thus enhancing the availability of 30S subunits on which protein synthesis initiation begins. The protein is Translation initiation factor IF-3 of Prochlorococcus marinus (strain NATL1A).